Here is a 345-residue protein sequence, read N- to C-terminus: Anthranilate phosphoribosyltransferase (345 aa).

5-phospho-alpha-D-ribose 1-diphosphate-binding positions include Gly84, 87–88, Thr92, 94–97, 112–120, and Ser124; these read GD, NIST, and KHGNRSVSS. Position 84 (Gly84) interacts with anthranilate. Mg(2+) is bound at residue Ser96. Asn115 is an anthranilate binding site. Arg170 provides a ligand contact to anthranilate. Asp229 and Glu230 together coordinate Mg(2+).

The protein belongs to the anthranilate phosphoribosyltransferase family. In terms of assembly, homodimer. The cofactor is Mg(2+).

It carries out the reaction N-(5-phospho-beta-D-ribosyl)anthranilate + diphosphate = 5-phospho-alpha-D-ribose 1-diphosphate + anthranilate. The protein operates within amino-acid biosynthesis; L-tryptophan biosynthesis; L-tryptophan from chorismate: step 2/5. Functionally, catalyzes the transfer of the phosphoribosyl group of 5-phosphorylribose-1-pyrophosphate (PRPP) to anthranilate to yield N-(5'-phosphoribosyl)-anthranilate (PRA). The protein is Anthranilate phosphoribosyltransferase of Xanthomonas axonopodis pv. citri (strain 306).